A 271-amino-acid polypeptide reads, in one-letter code: Elongation factor Ts (271 aa).

The segment at 76–79 (TDFV) is involved in Mg(2+) ion dislocation from EF-Tu.

It belongs to the EF-Ts family.

Its subcellular location is the cytoplasm. Functionally, associates with the EF-Tu.GDP complex and induces the exchange of GDP to GTP. It remains bound to the aminoacyl-tRNA.EF-Tu.GTP complex up to the GTP hydrolysis stage on the ribosome. This is Elongation factor Ts from Mycobacterium ulcerans (strain Agy99).